Reading from the N-terminus, the 206-residue chain is Thymidylate kinase (206 aa).

11 to 18 (GIDGAGKT) is an ATP binding site.

This sequence belongs to the thymidylate kinase family.

It carries out the reaction dTMP + ATP = dTDP + ADP. In terms of biological role, phosphorylation of dTMP to form dTDP in both de novo and salvage pathways of dTTP synthesis. The chain is Thymidylate kinase from Burkholderia cenocepacia (strain HI2424).